Reading from the N-terminus, the 492-residue chain is Aspartyl/glutamyl-tRNA(Asn/Gln) amidotransferase subunit B (492 aa).

This sequence belongs to the GatB/GatE family. GatB subfamily. As to quaternary structure, heterotrimer of A, B and C subunits.

The enzyme catalyses L-glutamyl-tRNA(Gln) + L-glutamine + ATP + H2O = L-glutaminyl-tRNA(Gln) + L-glutamate + ADP + phosphate + H(+). The catalysed reaction is L-aspartyl-tRNA(Asn) + L-glutamine + ATP + H2O = L-asparaginyl-tRNA(Asn) + L-glutamate + ADP + phosphate + 2 H(+). Allows the formation of correctly charged Asn-tRNA(Asn) or Gln-tRNA(Gln) through the transamidation of misacylated Asp-tRNA(Asn) or Glu-tRNA(Gln) in organisms which lack either or both of asparaginyl-tRNA or glutaminyl-tRNA synthetases. The reaction takes place in the presence of glutamine and ATP through an activated phospho-Asp-tRNA(Asn) or phospho-Glu-tRNA(Gln). The sequence is that of Aspartyl/glutamyl-tRNA(Asn/Gln) amidotransferase subunit B from Bradyrhizobium diazoefficiens (strain JCM 10833 / BCRC 13528 / IAM 13628 / NBRC 14792 / USDA 110).